We begin with the raw amino-acid sequence, 312 residues long: Ribosomal protein L11 methyltransferase (312 aa).

4 residues coordinate S-adenosyl-L-methionine: threonine 160, glycine 181, aspartate 203, and asparagine 248.

This sequence belongs to the methyltransferase superfamily. PrmA family.

The protein resides in the cytoplasm. It catalyses the reaction L-lysyl-[protein] + 3 S-adenosyl-L-methionine = N(6),N(6),N(6)-trimethyl-L-lysyl-[protein] + 3 S-adenosyl-L-homocysteine + 3 H(+). In terms of biological role, methylates ribosomal protein L11. This chain is Ribosomal protein L11 methyltransferase, found in Fusobacterium nucleatum subsp. nucleatum (strain ATCC 25586 / DSM 15643 / BCRC 10681 / CIP 101130 / JCM 8532 / KCTC 2640 / LMG 13131 / VPI 4355).